Reading from the N-terminus, the 642-residue chain is Fimbrin (642 aa).

EF-hand domains lie at 16 to 50 (EDLF…KDGD) and 51 to 86 (ATYD…LRES). 7 residues coordinate Ca(2+): aspartate 29, aspartate 31, tryptophan 35, aspartate 66, serine 68, arginine 70, and aspartate 75. Actin-binding regions lie at residues 125–394 (IVAG…GLEP) and 395–642 (IQEE…TLNK). Calponin-homology (CH) domains are found at residues 139 to 259 (EEER…RRGL), 287 to 390 (LPPE…NTHP), 411 to 521 (EREA…RRNI), and 534 to 642 (DMSD…TLNK).

Binds to actin, and functionally associates with actin structures involved in the development and maintenance of cell polarity. In Saccharomyces cerevisiae (strain ATCC 204508 / S288c) (Baker's yeast), this protein is Fimbrin (SAC6).